Consider the following 100-residue polypeptide: MHVCDLQKLVRIQLAFTTFPWMFSCHLLPTPELSSKRNQCLLYKTSGCLTQMPILYGHPATLLKDYILQAILQPGKKIQGGTEIQRGSFANQYQTDASHL.

This is an uncharacterized protein from Homo sapiens (Human).